The sequence spans 351 residues: Outer membrane porin protein 32 (351 aa).

Positions 1 to 19 are cleaved as a signal peptide; sequence MKKSLIALAVLAASGAAMA. Position 20 is a pyrrolidone carboxylic acid (Gln20).

This sequence to bacterial outer membrane proteins and porins. As to quaternary structure, homotrimer.

The protein resides in the cell outer membrane. In terms of biological role, forms anion selective channels. The sequence is that of Outer membrane porin protein 32 (omp32) from Delftia acidovorans (Pseudomonas acidovorans).